We begin with the raw amino-acid sequence, 392 residues long: Speckle-type POZ protein-like (392 aa).

The MATH domain occupies 31-161 (KFSYMWTINN…DDKLTLYCEV (131 aa)). Residues 200 to 267 (TDCSLFVEGK…IYTGGTPHVD (68 aa)) form the BTB domain.

Belongs to the Tdpoz family. In terms of assembly, homodimer. Heterodimer with SPOP. Component of cullin-RING-based BCR (BTB-CUL3-RBX1) E3 ubiquitin-protein ligase complexes containing homodimeric SPOPL or the heterodimer formed by SPOP and SPOPL.

It is found in the nucleus. The protein operates within protein modification; protein ubiquitination. Functionally, component of a cullin-RING-based BCR (BTB-CUL3-RBX1) E3 ubiquitin-protein ligase complex that mediates the ubiquitination and subsequent proteasomal degradation of target proteins, but with relatively low efficiency. This is Speckle-type POZ protein-like (spopl) from Xenopus laevis (African clawed frog).